The following is a 367-amino-acid chain: DNA-directed RNA polymerase II subunit GRINL1A (367 aa).

Positions 15-40 (DLERRSLAELREMLKRQERLLRNEKF) form a coiled coil. Positions 29–68 (KRQERLLRNEKFICKLPDKGKKIFDSFAKLKAAIAECEEV) are important for transcription repressor activity. Polar residues-rich tracts occupy residues 117–131 (SVDN…QNQG), 176–185 (RVSSQAEDTS), and 205–225 (GEQQ…SGTQ). Disordered stretches follow at residues 117 to 185 (SVDN…EDTS), 203 to 225 (DQGE…SGTQ), and 254 to 281 (PFRQ…RRDK). Residues 226-297 (KKPHYMEVLE…TAARLLPLHH (72 aa)) are interaction with Pol II. At serine 269 the chain carries Phosphoserine. An important for transcription repressor activity region spans residues 298-313 (MPTQLLSIEESLALQK). Residues 300 to 329 (TQLLSIEESLALQKQRKQKYEEMQAKLAAQ) adopt a coiled-coil conformation. Residues 314–339 (QRKQKYEEMQAKLAAQKLAERLNIKM) form an interaction with Pol II region. The segment at 335 to 367 (LNIKMRSYNPEGESSGRYREVRDEDDDWSSDEF) is disordered. Residues 357-367 (DEDDDWSSDEF) are compositionally biased toward acidic residues.

It belongs to the GRINL1 family. As to quaternary structure, component of the Pol II(G) complex, which contains the RNA polymerase II (Pol II) core complex subunits and POLR2M isoform 1. Pol II(G) appears to be an abundant form of Pol II. In terms of processing, dephosphorylated at Ser-269 by the PNUTS-PP1 complex, promoting RNA polymerase II transcription pause-release.

The protein resides in the nucleus. In terms of biological role, appears to be a stable component of the Pol II(G) complex form of RNA polymerase II (Pol II). Pol II synthesizes mRNA precursors and many functional non-coding RNAs and is the central component of the basal RNA polymerase II transcription machinery. May play a role in the Mediator complex-dependent regulation of transcription activation. Acts as a negative regulator of transcriptional activation; this repression is relieved by the Mediator complex, which restores Pol II(G) activator-dependent transcription to a level equivalent to that of Pol II. The polypeptide is DNA-directed RNA polymerase II subunit GRINL1A (POLR2M) (Pongo abelii (Sumatran orangutan)).